The following is a 146-amino-acid chain: Small ribosomal subunit protein uS5 (146 aa).

One can recognise an S5 DRBM domain in the interval 8–71 (FEESIVNIGR…DNAFKNLSKV (64 aa)).

This sequence belongs to the universal ribosomal protein uS5 family. In terms of assembly, part of the 30S ribosomal subunit. Contacts proteins S4 and S8.

Functionally, with S4 and S12 plays an important role in translational accuracy. Its function is as follows. Located at the back of the 30S subunit body where it stabilizes the conformation of the head with respect to the body. The sequence is that of Small ribosomal subunit protein uS5 from Sulfurimonas denitrificans (strain ATCC 33889 / DSM 1251) (Thiomicrospira denitrificans (strain ATCC 33889 / DSM 1251)).